Consider the following 276-residue polypeptide: Chymotrypsin (276 aa).

Positions 1–16 (MKVALVVLALFGVSLA) are cleaved as a signal peptide. Residues 17 to 45 (ASIDNIEIPPSKNIYVEPINQPEVDPSLE) constitute a propeptide, activation peptide. One can recognise a Peptidase S1 domain in the interval 46–272 (IVNGQEVVPH…YLNWLQTHSE (227 aa)). The cysteines at positions 74 and 90 are disulfide-linked. Residues His-89 and Asp-135 each act as charge relay system in the active site. Residues Asn-144 and Asn-193 are each glycosylated (N-linked (GlcNAc...) asparagine). 2 cysteine pairs are disulfide-bonded: Cys-202-Cys-215 and Cys-225-Cys-250. Ser-229 acts as the Charge relay system in catalysis.

The protein belongs to the peptidase S1 family. Expressed in larval carcasses and gut, and adult gut.

Its subcellular location is the secreted. It localises to the extracellular space. It carries out the reaction Preferential cleavage: Tyr-|-Xaa, Trp-|-Xaa, Phe-|-Xaa, Leu-|-Xaa.. Its function is as follows. Serine protease with chymotryptic and collagenolytic activities. This chain is Chymotrypsin, found in Phaedon cochleariae (Mustard beetle).